The chain runs to 348 residues: Sulfate/thiosulfate import ATP-binding protein CysA (348 aa).

The ABC transporter domain maps to 3–237 (IRIQELCKQF…PSSPFVYSFV (235 aa)). ATP is bound at residue 35 to 42 (GPSGSGKT).

It belongs to the ABC transporter superfamily. Sulfate/tungstate importer (TC 3.A.1.6) family. In terms of assembly, the complex is composed of two ATP-binding proteins (CysA), two transmembrane proteins (CysT and CysW) and a solute-binding protein (CysP).

It localises to the cell inner membrane. It catalyses the reaction sulfate(out) + ATP + H2O = sulfate(in) + ADP + phosphate + H(+). The catalysed reaction is thiosulfate(out) + ATP + H2O = thiosulfate(in) + ADP + phosphate + H(+). In terms of biological role, part of the ABC transporter complex CysAWTP involved in sulfate/thiosulfate import. Responsible for energy coupling to the transport system. The protein is Sulfate/thiosulfate import ATP-binding protein CysA of Xylella fastidiosa (strain 9a5c).